The following is a 499-amino-acid chain: Cysteine--tRNA ligase (499 aa).

Residue cysteine 29 coordinates Zn(2+). The 'HIGH' region signature appears at 31–41 (VTVYDLCHLGH). Residues cysteine 213, histidine 238, and glutamate 242 each coordinate Zn(2+). The 'KMSKS' region motif lies at 270–274 (KMSKS). Lysine 273 is a binding site for ATP.

This sequence belongs to the class-I aminoacyl-tRNA synthetase family. Monomer. Zn(2+) is required as a cofactor.

Its subcellular location is the cytoplasm. The catalysed reaction is tRNA(Cys) + L-cysteine + ATP = L-cysteinyl-tRNA(Cys) + AMP + diphosphate. The polypeptide is Cysteine--tRNA ligase (Prochlorococcus marinus (strain MIT 9303)).